Here is a 367-residue protein sequence, read N- to C-terminus: UDP-galactopyranose mutase (367 aa).

FAD is bound by residues Phe12, 31-32, Asn39, and 56-57; these read EK and HI. Phe12 contacts UDP-alpha-D-galactose. 4 residues coordinate UDP-alpha-D-galactose: Asn80, Thr152, Trp156, and Tyr181. 212–213 is a binding site for FAD; it reads DF. Residues Asn268, Arg278, and Tyr311 each contribute to the UDP-alpha-D-galactose site. Arg340 lines the FAD pocket. A UDP-alpha-D-galactose-binding site is contributed by Tyr346. Residue 347-352 participates in FAD binding; it reads YDMHQV.

In terms of assembly, homodimer. FAD is required as a cofactor.

The catalysed reaction is UDP-alpha-D-galactose = UDP-alpha-D-galactofuranose. It participates in bacterial outer membrane biogenesis; lipopolysaccharide biosynthesis. Functionally, catalyzes the interconversion through a 2-keto intermediate of uridine diphosphogalactopyranose (UDP-GalP) into uridine diphosphogalactofuranose (UDP-GalF). The chain is UDP-galactopyranose mutase (glf) from Escherichia coli (strain K12).